The following is a 380-amino-acid chain: uncharacterized protein (380 aa).

Positions 111–369 (APYSMERHHD…DCLAILAEMI (259 aa)) constitute a Peptidase M14 domain. H164, E167, and H257 together coordinate Zn(2+). Residue E333 is the Proton donor/acceptor of the active site.

Zn(2+) serves as cofactor.

This is an uncharacterized protein from Zymomonas mobilis subsp. mobilis (strain ATCC 31821 / ZM4 / CP4).